The primary structure comprises 370 residues: Divinyl chlorophyll a/b light-harvesting protein PcbD (370 aa).

6 helical membrane-spanning segments follow: residues 27–47 (FIAS…GSTL), 88–108 (VAAV…GALL), 140–160 (FILG…VEWA), 201–221 (VMGG…IHMV), 248–268 (AVLS…AFWA), and 315–335 (LVNV…WHAL).

It belongs to the PsbB/PsbC family. IsiA/Pcb subfamily. In terms of assembly, the antenna complex consists of divinyl chlorophylls (a and b) and divinyl chlorophyll a/b binding proteins and binds more divinyl chlorophyll b than does the antenna complex from high-light-adapted Prochlorococcus. Requires divinyl chlorophyll a as cofactor. It depends on divinyl chlorophyll b as a cofactor.

It is found in the cellular thylakoid membrane. The antenna complex functions as a light receptor, it captures and delivers excitation energy to photosystems II and I. The Prochlorales pcb genes are not related to higher plant LHCs. This Prochlorococcus marinus (strain NATL2A) protein is Divinyl chlorophyll a/b light-harvesting protein PcbD (pcbD).